The following is a 176-amino-acid chain: Inorganic pyrophosphatase (176 aa).

3 residues coordinate substrate: Lys30, Arg44, and Tyr56. Positions 66, 71, and 103 each coordinate Mg(2+). Tyr142 serves as a coordination point for substrate.

This sequence belongs to the PPase family. As to quaternary structure, homohexamer. It depends on Mg(2+) as a cofactor.

The protein localises to the cytoplasm. It catalyses the reaction diphosphate + H2O = 2 phosphate + H(+). Catalyzes the hydrolysis of inorganic pyrophosphate (PPi) forming two phosphate ions. This chain is Inorganic pyrophosphatase, found in Aeropyrum pernix (strain ATCC 700893 / DSM 11879 / JCM 9820 / NBRC 100138 / K1).